A 420-amino-acid polypeptide reads, in one-letter code: UDP-N-acetylglucosamine 1-carboxyvinyltransferase 2 (420 aa).

Phosphoenolpyruvate is bound at residue 22–23 (KN). Residue arginine 92 coordinates UDP-N-acetyl-alpha-D-glucosamine. Cysteine 116 acts as the Proton donor in catalysis. Cysteine 116 is subject to 2-(S-cysteinyl)pyruvic acid O-phosphothioketal. Residues 121 to 125 (RPIDL), aspartate 307, and isoleucine 329 contribute to the UDP-N-acetyl-alpha-D-glucosamine site.

The protein belongs to the EPSP synthase family. MurA subfamily.

The protein localises to the cytoplasm. It carries out the reaction phosphoenolpyruvate + UDP-N-acetyl-alpha-D-glucosamine = UDP-N-acetyl-3-O-(1-carboxyvinyl)-alpha-D-glucosamine + phosphate. The protein operates within cell wall biogenesis; peptidoglycan biosynthesis. Functionally, cell wall formation. Adds enolpyruvyl to UDP-N-acetylglucosamine. This chain is UDP-N-acetylglucosamine 1-carboxyvinyltransferase 2, found in Streptococcus thermophilus (strain ATCC BAA-250 / LMG 18311).